We begin with the raw amino-acid sequence, 148 residues long: Large ribosomal subunit protein uL15 (148 aa).

The span at 1 to 30 shows a compositional bias: basic residues; sequence MPSKLRKTRKLRGHVSHGHGRIGKHRKHPG. The disordered stretch occupies residues 1 to 38; it reads MPSKLRKTRKLRGHVSHGHGRIGKHRKHPGGRGNAGGM.

This sequence belongs to the universal ribosomal protein uL15 family. In terms of assembly, component of the large ribosomal subunit.

The protein resides in the cytoplasm. Functionally, component of the large ribosomal subunit. The ribosome is a large ribonucleoprotein complex responsible for the synthesis of proteins in the cell. In Xenopus laevis (African clawed frog), this protein is Large ribosomal subunit protein uL15 (rpl27a).